The chain runs to 314 residues: Methionyl-tRNA formyltransferase (314 aa).

Position 109-112 (109-112 (SVLP)) interacts with (6S)-5,6,7,8-tetrahydrofolate.

The protein belongs to the Fmt family.

The catalysed reaction is L-methionyl-tRNA(fMet) + (6R)-10-formyltetrahydrofolate = N-formyl-L-methionyl-tRNA(fMet) + (6S)-5,6,7,8-tetrahydrofolate + H(+). Functionally, attaches a formyl group to the free amino group of methionyl-tRNA(fMet). The formyl group appears to play a dual role in the initiator identity of N-formylmethionyl-tRNA by promoting its recognition by IF2 and preventing the misappropriation of this tRNA by the elongation apparatus. The protein is Methionyl-tRNA formyltransferase of Dictyoglomus turgidum (strain DSM 6724 / Z-1310).